Reading from the N-terminus, the 318-residue chain is Methionyl-tRNA formyltransferase (318 aa).

Position 115 to 118 (115 to 118) interacts with (6S)-5,6,7,8-tetrahydrofolate; sequence SLLP.

Belongs to the Fmt family.

The catalysed reaction is L-methionyl-tRNA(fMet) + (6R)-10-formyltetrahydrofolate = N-formyl-L-methionyl-tRNA(fMet) + (6S)-5,6,7,8-tetrahydrofolate + H(+). In terms of biological role, attaches a formyl group to the free amino group of methionyl-tRNA(fMet). The formyl group appears to play a dual role in the initiator identity of N-formylmethionyl-tRNA by promoting its recognition by IF2 and preventing the misappropriation of this tRNA by the elongation apparatus. This chain is Methionyl-tRNA formyltransferase, found in Deinococcus radiodurans (strain ATCC 13939 / DSM 20539 / JCM 16871 / CCUG 27074 / LMG 4051 / NBRC 15346 / NCIMB 9279 / VKM B-1422 / R1).